A 195-amino-acid chain; its full sequence is Magnetosome membrane protein 22 (195 aa).

A compositionally biased stretch (low complexity) spans 1–28 (MAAQTAASEAPAPAAAPADSPTTAGPTP). The interval 1-31 (MAAQTAASEAPAPAAAPADSPTTAGPTPDSV) is disordered. A run of 3 helical transmembrane segments spans residues 45–65 (VLAA…AAVV), 90–110 (SVIA…AVAV), and 115–135 (LIPG…AGAT).

Its subcellular location is the magnetosome membrane. The polypeptide is Magnetosome membrane protein 22 (Magnetospirillum gryphiswaldense (strain DSM 6361 / JCM 21280 / NBRC 15271 / MSR-1)).